A 537-amino-acid polypeptide reads, in one-letter code: ATP synthase subunit beta (537 aa).

A disordered region spans residues 1-61; it reads MAKAATSKKE…SSPQKGGKKG (61 aa). Residues 7-18 are compositionally biased toward basic and acidic residues; the sequence is SKKEASKVEAKK. The span at 44 to 55 shows a compositional bias: polar residues; the sequence is NSPSRTGSSSPQ. 209–216 is an ATP binding site; that stretch reads GGAGVGKT.

This sequence belongs to the ATPase alpha/beta chains family. As to quaternary structure, F-type ATPases have 2 components, CF(1) - the catalytic core - and CF(0) - the membrane proton channel. CF(1) has five subunits: alpha(3), beta(3), gamma(1), delta(1), epsilon(1). CF(0) has three main subunits: a(1), b(2) and c(9-12). The alpha and beta chains form an alternating ring which encloses part of the gamma chain. CF(1) is attached to CF(0) by a central stalk formed by the gamma and epsilon chains, while a peripheral stalk is formed by the delta and b chains.

The protein resides in the cell inner membrane. It catalyses the reaction ATP + H2O + 4 H(+)(in) = ADP + phosphate + 5 H(+)(out). Produces ATP from ADP in the presence of a proton gradient across the membrane. The catalytic sites are hosted primarily by the beta subunits. The chain is ATP synthase subunit beta from Bartonella bacilliformis (strain ATCC 35685 / KC583 / Herrer 020/F12,63).